The chain runs to 139 residues: S-adenosylmethionine decarboxylase proenzyme (139 aa).

The active-site Schiff-base intermediate with substrate; via pyruvic acid is the S63. S63 bears the Pyruvic acid (Ser); by autocatalysis mark. The active-site Proton acceptor; for processing activity is the H68. C83 functions as the Proton donor; for catalytic activity in the catalytic mechanism.

It belongs to the prokaryotic AdoMetDC family. Type 1 subfamily. In terms of assembly, heterotetramer of two alpha and two beta chains arranged as a dimer of alpha/beta heterodimers. Pyruvate is required as a cofactor. Post-translationally, is synthesized initially as an inactive proenzyme. Formation of the active enzyme involves a self-maturation process in which the active site pyruvoyl group is generated from an internal serine residue via an autocatalytic post-translational modification. Two non-identical subunits are generated from the proenzyme in this reaction, and the pyruvate is formed at the N-terminus of the alpha chain, which is derived from the carboxyl end of the proenzyme. The post-translation cleavage follows an unusual pathway, termed non-hydrolytic serinolysis, in which the side chain hydroxyl group of the serine supplies its oxygen atom to form the C-terminus of the beta chain, while the remainder of the serine residue undergoes an oxidative deamination to produce ammonia and the pyruvoyl group blocking the N-terminus of the alpha chain.

It catalyses the reaction S-adenosyl-L-methionine + H(+) = S-adenosyl 3-(methylsulfanyl)propylamine + CO2. It participates in amine and polyamine biosynthesis; S-adenosylmethioninamine biosynthesis; S-adenosylmethioninamine from S-adenosyl-L-methionine: step 1/1. Its function is as follows. Catalyzes the decarboxylation of S-adenosylmethionine to S-adenosylmethioninamine (dcAdoMet), the propylamine donor required for the synthesis of the polyamines spermine and spermidine from the diamine putrescine. This Pyrococcus abyssi (strain GE5 / Orsay) protein is S-adenosylmethionine decarboxylase proenzyme.